The primary structure comprises 139 residues: Translation initiation factor 2 subunit beta (139 aa).

It belongs to the eIF-2-beta/eIF-5 family. As to quaternary structure, heterotrimer composed of an alpha, a beta and a gamma chain.

In terms of biological role, eIF-2 functions in the early steps of protein synthesis by forming a ternary complex with GTP and initiator tRNA. This is Translation initiation factor 2 subunit beta from Saccharolobus islandicus (strain Y.N.15.51 / Yellowstone #2) (Sulfolobus islandicus).